The following is a 111-amino-acid chain: Protein GLUTAMINE DUMPER 6 (111 aa).

Topologically, residues 1–16 (MRPTPKVEIWKSPVPY) are extracellular. A helical transmembrane segment spans residues 17–37 (LFGGLFLLVLLIALALLSLVC). Residues 38–111 (THQKPSSSSN…NCDNVTVIST (74 aa)) lie on the Cytoplasmic side of the membrane. Positions 40–49 (QKPSSSSNNN) are enriched in polar residues. A disordered region spans residues 40 to 63 (QKPSSSSNNNHMDEEDDVGDKDAK). A VIMAG; degenerate motif is present at residues 75–79 (VILAG).

It belongs to the GLUTAMINE DUMPER 1 (TC 9.B.60) family. In terms of tissue distribution, expressed in the vascular tissues.

The protein resides in the membrane. Its function is as follows. Probable subunit of an amino acid transporter involved in the regulation of the amino acid metabolism. Stimulates amino acid export by activating nonselective amino acid facilitators. The protein is Protein GLUTAMINE DUMPER 6 (GDU6) of Arabidopsis thaliana (Mouse-ear cress).